Here is a 382-residue protein sequence, read N- to C-terminus: Mucosal addressin cell adhesion molecule 1 (382 aa).

The signal sequence occupies residues 1-18 (MDFGLALLLAGLLGLLLG). The Extracellular portion of the chain corresponds to 19–317 (QSLQVKPLQV…TGSSKPAGDQ (299 aa)). Ig-like domains lie at 23 to 112 (VKPL…LLVY) and 113 to 231 (AFPD…TSPE). 3 disulfides stabilise this stretch: Cys47–Cys94, Cys51–Cys98, and Cys134–Cys204. The N-linked (GlcNAc...) asparagine glycan is linked to Asn83. A disordered region spans residues 223-314 (VLHSPTSPEP…VIPTGSSKPA (92 aa)). Residues 226 to 317 (SPTSPEPPDT…TGSSKPAGDQ (92 aa)) are mucin-like. The stretch at 228–231 (TSPE) is one 1; truncated repeat. Residues 228–271 (TSPEPPDTTSPESPDTTSPESPDTTSQEPPDTTSPEPPDKTSPE) are 5.5 X 8 AA tandem repeats of [PS]-P-D-T-T-S-[QP]-E. 5 consecutive repeat copies span residues 232 to 239 (PPDTTSPE), 240 to 247 (SPDTTSPE), 248 to 255 (SPDTTSQE), 256 to 263 (PPDTTSPE), and 264 to 271 (PPDKTSPE). Residues 236-261 (TSPESPDTTSPESPDTTSQEPPDTTS) are compositionally biased toward low complexity. The segment covering 277–288 (GSTHTPRSPGST) has biased composition (low complexity). A helical membrane pass occupies residues 318–338 (LPAALWTSSAVLGLLLLALPT). Topologically, residues 339–382 (YHLWKRCRHLAEDDTHPPASLRLLPQVSAWAGLRGTGQVGISPS) are cytoplasmic.

As to quaternary structure, homodimer. The Ser/Thr-rich mucin-like domain may provide possible sites for O-glycosylation. In terms of tissue distribution, highly expressed on high endothelial venules (HEV) and lamina propia venules found in the small intestine, and to a lesser extent in the colon and spleen. Very low levels of expression found in pancreas and brain. Not expressed in the thymus, prostate, ovaries, testis, heart, placenta, lung, liver, skeletal muscle, kidney or peripheral blood leukocytes.

The protein resides in the membrane. Functionally, cell adhesion leukocyte receptor expressed by mucosal venules, helps to direct lymphocyte traffic into mucosal tissues including the Peyer patches and the intestinal lamina propria. It can bind both integrin alpha-4/beta-7 and L-selectin, regulating both the passage and retention of leukocytes. Isoform 2, lacking the mucin-like domain, may be specialized in supporting integrin alpha-4/beta-7-dependent adhesion strengthening, independent of L-selectin binding. The sequence is that of Mucosal addressin cell adhesion molecule 1 (MADCAM1) from Homo sapiens (Human).